The following is a 404-amino-acid chain: Serine/threonine-protein phosphatase 2A regulatory subunit rsa-1 (404 aa).

In terms of assembly, part of a complex consisting of a common heterodimeric core enzyme, composed of catalytic subunit let-92 and constant regulatory subunit paa-1, that associates with a variety of regulatory subunits which confer distinct properties to the holoenzyme. Interacts with rsa-2, spd-5 and tpxl-1.

The protein resides in the cytoplasm. It localises to the cytoskeleton. Its subcellular location is the microtubule organizing center. It is found in the centrosome. Functionally, regulatory subunit of phosphatase let-92 which recruits let-92/paa-1 complex to the centrosomes, thereby regulating microtubule outgrowth from centrosomes and mitotic spindle assembly ensuring the stability of kinetochore microtubules. The protein is Serine/threonine-protein phosphatase 2A regulatory subunit rsa-1 of Caenorhabditis elegans.